The chain runs to 203 residues: Glutathione S-transferase (203 aa).

In terms of domain architecture, GST N-terminal spans 2-79 (PDYKVYYFNV…YLANQVGLAG (78 aa)). Glutathione is bound by residues Tyr-8, Trp-39, Lys-43, 49-51 (GQM), and 63-64 (QS). One can recognise a GST C-terminal domain in the interval 81–203 (DDWENLMIDT…YIAKRPITEV (123 aa)).

This sequence belongs to the GST superfamily. Sigma family. In terms of assembly, homodimer.

The enzyme catalyses RX + glutathione = an S-substituted glutathione + a halide anion + H(+). Conjugation of reduced glutathione to a wide number of exogenous and endogenous hydrophobic electrophiles. This chain is Glutathione S-transferase (GstS1), found in Anopheles gambiae (African malaria mosquito).